The chain runs to 118 residues: Small ribosomal subunit protein uS13 (118 aa).

Positions 94 to 118 (SLPLRGQRTKTNARTRKGPRKPIRK) are disordered.

This sequence belongs to the universal ribosomal protein uS13 family. In terms of assembly, part of the 30S ribosomal subunit. Forms a loose heterodimer with protein S19. Forms two bridges to the 50S subunit in the 70S ribosome.

Its function is as follows. Located at the top of the head of the 30S subunit, it contacts several helices of the 16S rRNA. In the 70S ribosome it contacts the 23S rRNA (bridge B1a) and protein L5 of the 50S subunit (bridge B1b), connecting the 2 subunits; these bridges are implicated in subunit movement. Contacts the tRNAs in the A and P-sites. The sequence is that of Small ribosomal subunit protein uS13 from Shewanella halifaxensis (strain HAW-EB4).